The sequence spans 553 residues: Zinc finger protein Elbow (553 aa).

Disordered stretches follow at residues serine 59–proline 243 and glycine 388–serine 407. Low complexity-rich tracts occupy residues serine 96–valine 110 and serine 121–proline 134. 3 stretches are compositionally biased toward polar residues: residues proline 137 to threonine 146, threonine 153 to threonine 173, and threonine 224 to glutamate 236. Positions serine 287–alanine 480 are self-association. An interaction with noc region spans residues serine 287–proline 553. A compositionally biased stretch (gly residues) spans glycine 388–glycine 406. A C2H2-type zinc finger spans residues tyrosine 437 to histidine 466.

Belongs to the Elbow/Noc family. In terms of assembly, self-associates. Interacts with gro and noc.

Its function is as follows. May negatively regulate Notch-induced cell proliferation in the eye-head primordium. May act in leg and wing primordia to negatively regulate body-wall specifying genes and thereby promote appendage formation. Required for tracheal development. The chain is Zinc finger protein Elbow (elB) from Drosophila melanogaster (Fruit fly).